We begin with the raw amino-acid sequence, 1143 residues long: cGMP-specific 3',5'-cyclic phosphodiesterase (1143 aa).

Composition is skewed to low complexity over residues 1 to 19 and 31 to 45; these read MHGPVSRSSSSSNMTDVSS and TTSSSSAATTSASSS. The interval 1–167 is disordered; that stretch reads MHGPVSRSSS…KASTTASQQD (167 aa). Residues 46-59 are compositionally biased toward polar residues; it reads KPLTNGANKTTIST. A compositionally biased stretch (low complexity) spans 75-84; that stretch reads GAIPASSSSG. Residues 96–107 are compositionally biased toward polar residues; it reads SNNNRPAATNRS. Low complexity predominate over residues 131 to 153; that stretch reads SSSSPSQSPSQTQASIQTQTSQQ. GAF domains follow at residues 272 to 424 and 456 to 637; these read DIDV…GIGI and NLEC…GLGI. The region spanning 667 to 990 is the PDEase domain; that stretch reads SQDQTEKLTQ…RNWQDLAEKV (324 aa). His-743 acts as the Proton donor in catalysis. 4 residues coordinate a divalent metal cation: His-747, His-783, Asp-784, and Asp-894. 2 disordered regions span residues 1031 to 1060 and 1090 to 1143; these read QQSQHGSEDSHTPEHQRSGSRLSMKKTGAL and SHVS…CALL. Basic and acidic residues-rich tracts occupy residues 1036–1047 and 1090–1100; these read GSEDSHTPEHQR and SHVSEDMDDKS. Low complexity predominate over residues 1109 to 1127; sequence ASGSMGRMSASSSTSSTGG. A compositionally biased stretch (basic residues) spans 1133–1143; sequence SKKRSKLCALL. Cys-1140 carries the cysteine methyl ester modification. The S-farnesyl cysteine moiety is linked to residue Cys-1140. Residues 1141–1143 constitute a propeptide, removed in mature form; the sequence is ALL.

The protein belongs to the cyclic nucleotide phosphodiesterase family. Interacts with PrBP. Requires a divalent metal cation as cofactor.

It is found in the cell membrane. It catalyses the reaction 3',5'-cyclic GMP + H2O = GMP + H(+). Has a role regulating cGMP transport in Malpighian tubule principal cells. This chain is cGMP-specific 3',5'-cyclic phosphodiesterase, found in Drosophila simulans (Fruit fly).